The primary structure comprises 158 residues: Transcription elongation factor GreA (158 aa).

This sequence belongs to the GreA/GreB family.

Its function is as follows. Necessary for efficient RNA polymerase transcription elongation past template-encoded arresting sites. The arresting sites in DNA have the property of trapping a certain fraction of elongating RNA polymerases that pass through, resulting in locked ternary complexes. Cleavage of the nascent transcript by cleavage factors such as GreA or GreB allows the resumption of elongation from the new 3'terminus. GreA releases sequences of 2 to 3 nucleotides. In Pseudomonas syringae pv. tomato (strain ATCC BAA-871 / DC3000), this protein is Transcription elongation factor GreA.